Reading from the N-terminus, the 224-residue chain is UPF0758 protein Csal_2972 (224 aa).

An MPN domain is found at 102–224 (ALTSPTLVRR…VVSFAERGWL (123 aa)). Zn(2+)-binding residues include His-173, His-175, and Asp-186. The JAMM motif motif lies at 173–186 (HNHPSGVAEPSDAD).

The protein belongs to the UPF0758 family.

In Chromohalobacter salexigens (strain ATCC BAA-138 / DSM 3043 / CIP 106854 / NCIMB 13768 / 1H11), this protein is UPF0758 protein Csal_2972.